Reading from the N-terminus, the 571-residue chain is Leucine aminopeptidase A2, chloroplastic (571 aa).

A chloroplast-targeting transit peptide spans 1-42; it reads MATLRVSSLFASSSSSLHSNPSVFTKYQSSPKWAFSFPVTPL. 2 residues coordinate Mg(2+): lysine 342 and aspartate 347. The active site involves lysine 354. 3 residues coordinate Mg(2+): aspartate 367, aspartate 427, and glutamate 429. The active site involves arginine 431.

It belongs to the peptidase M17 family. In terms of assembly, homohexamer (dimer of homotrimers). Mg(2+) is required as a cofactor. In terms of tissue distribution, expressed during floral development. Expressed in healthy and senescent leaves, cotyledons (emergence from seed coats), pistils, sepals, petals, stamens, and floral buds (at protein level).

Its subcellular location is the plastid. The protein localises to the chloroplast. It carries out the reaction Release of an N-terminal amino acid, Xaa-|-Yaa-, in which Xaa is preferably Leu, but may be other amino acids including Pro although not Arg or Lys, and Yaa may be Pro. Amino acid amides and methyl esters are also readily hydrolyzed, but rates on arylamides are exceedingly low.. The catalysed reaction is Release of N-terminal proline from a peptide.. Functionally, catalyzes the removal of unsubstituted N-terminal amino acids from various peptides. When associated as homohexamer, catalyzes the proteolyzes of Xaa-Leu dipeptides. Possesses leucine aminopeptidase activity against the model substrate leucine-amido methyl coumarin. Presumably involved in the processing and regular turnover of intracellular proteins. Regulates wound signaling and has a role in insect defense. In terms of biological role, functions as a molecular chaperone to protect proteins from heat-induced damage. In Solanum lycopersicum (Tomato), this protein is Leucine aminopeptidase A2, chloroplastic.